A 463-amino-acid polypeptide reads, in one-letter code: Argininosuccinate lyase (463 aa).

It belongs to the lyase 1 family. Argininosuccinate lyase subfamily.

It is found in the cytoplasm. The enzyme catalyses 2-(N(omega)-L-arginino)succinate = fumarate + L-arginine. The protein operates within amino-acid biosynthesis; L-arginine biosynthesis; L-arginine from L-ornithine and carbamoyl phosphate: step 3/3. The protein is Argininosuccinate lyase of Dinoroseobacter shibae (strain DSM 16493 / NCIMB 14021 / DFL 12).